We begin with the raw amino-acid sequence, 391 residues long: Elongation factor Tu (391 aa).

In terms of domain architecture, tr-type G spans 10–201 (KPHVNIGTIG…AVDEYIPTPA (192 aa)). The segment at 19 to 26 (GHVDHGKT) is G1. 19 to 26 (GHVDHGKT) serves as a coordination point for GTP. Position 26 (threonine 26) interacts with Mg(2+). Residues 55–59 (GITIS) are G2. Residues 76–79 (DCPG) are G3. Residues 76 to 80 (DCPGH) and 131 to 134 (NKVD) each bind GTP. Positions 131–134 (NKVD) are G4. The tract at residues 169-171 (SAL) is G5.

It belongs to the TRAFAC class translation factor GTPase superfamily. Classic translation factor GTPase family. EF-Tu/EF-1A subfamily. In terms of assembly, monomer.

It is found in the cytoplasm. The enzyme catalyses GTP + H2O = GDP + phosphate + H(+). GTP hydrolase that promotes the GTP-dependent binding of aminoacyl-tRNA to the A-site of ribosomes during protein biosynthesis. In Jannaschia sp. (strain CCS1), this protein is Elongation factor Tu.